The primary structure comprises 95 residues: Co-chaperonin GroES (95 aa).

This sequence belongs to the GroES chaperonin family. Heptamer of 7 subunits arranged in a ring. Interacts with the chaperonin GroEL.

It localises to the cytoplasm. Together with the chaperonin GroEL, plays an essential role in assisting protein folding. The GroEL-GroES system forms a nano-cage that allows encapsulation of the non-native substrate proteins and provides a physical environment optimized to promote and accelerate protein folding. GroES binds to the apical surface of the GroEL ring, thereby capping the opening of the GroEL channel. This chain is Co-chaperonin GroES, found in Vesicomyosocius okutanii subsp. Calyptogena okutanii (strain HA).